The primary structure comprises 107 residues: uncharacterized protein (107 aa).

A disordered region spans residues 86-107 (QVSNHEEDADVLETQDDNAEQV). Residues 92–107 (EDADVLETQDDNAEQV) are compositionally biased toward acidic residues.

This is an uncharacterized protein from Rickettsia prowazekii (strain Madrid E).